Consider the following 577-residue polypeptide: Nuclear fusion protein tht1 (577 aa).

The N-terminal stretch at Met-1 to Gly-29 is a signal peptide. Residues Asp-30–Asn-404 lie on the Lumenal side of the membrane. Asn-163 and Asn-372 each carry an N-linked (GlcNAc...) asparagine glycan. Residues Ile-405–Phe-425 traverse the membrane as a helical segment. Residues Lys-426 to Arg-433 are Cytoplasmic-facing. Residues Pro-434–Thr-454 form a helical membrane-spanning segment. Topologically, residues Ser-455–Thr-470 are lumenal. A helical transmembrane segment spans residues Leu-471–Leu-491. The Cytoplasmic portion of the chain corresponds to Asn-492 to Asp-577.

Belongs to the KAR5 family. N-glycosylated.

It localises to the endoplasmic reticulum membrane. The protein resides in the nucleus membrane. Functionally, required for nuclear membrane fusion during karyogamy. The sequence is that of Nuclear fusion protein tht1 (tht1) from Schizosaccharomyces pombe (strain 972 / ATCC 24843) (Fission yeast).